The sequence spans 134 residues: Translation initiation factor 2 subunit beta (134 aa).

It belongs to the eIF-2-beta/eIF-5 family. Heterotrimer composed of an alpha, a beta and a gamma chain.

EIF-2 functions in the early steps of protein synthesis by forming a ternary complex with GTP and initiator tRNA. In Pyrobaculum arsenaticum (strain DSM 13514 / JCM 11321 / PZ6), this protein is Translation initiation factor 2 subunit beta.